We begin with the raw amino-acid sequence, 418 residues long: Glutamyl-tRNA reductase (418 aa).

Substrate contacts are provided by residues 49–52 (TCNR), S109, 114–116 (EPQ), and Q120. The active-site Nucleophile is the C50. 189-194 (GAGETI) provides a ligand contact to NADP(+).

This sequence belongs to the glutamyl-tRNA reductase family. In terms of assembly, homodimer.

The enzyme catalyses (S)-4-amino-5-oxopentanoate + tRNA(Glu) + NADP(+) = L-glutamyl-tRNA(Glu) + NADPH + H(+). The protein operates within porphyrin-containing compound metabolism; protoporphyrin-IX biosynthesis; 5-aminolevulinate from L-glutamyl-tRNA(Glu): step 1/2. In terms of biological role, catalyzes the NADPH-dependent reduction of glutamyl-tRNA(Glu) to glutamate 1-semialdehyde (GSA). The sequence is that of Glutamyl-tRNA reductase from Cronobacter sakazakii (strain ATCC BAA-894) (Enterobacter sakazakii).